Consider the following 313-residue polypeptide: Glyoxylate/hydroxypyruvate reductase A (313 aa).

Arg-228 is an active-site residue. His-276 acts as the Proton donor in catalysis.

It belongs to the D-isomer specific 2-hydroxyacid dehydrogenase family. GhrA subfamily.

It localises to the cytoplasm. The enzyme catalyses glycolate + NADP(+) = glyoxylate + NADPH + H(+). It carries out the reaction (R)-glycerate + NAD(+) = 3-hydroxypyruvate + NADH + H(+). The catalysed reaction is (R)-glycerate + NADP(+) = 3-hydroxypyruvate + NADPH + H(+). In terms of biological role, catalyzes the NADPH-dependent reduction of glyoxylate and hydroxypyruvate into glycolate and glycerate, respectively. This Serratia proteamaculans (strain 568) protein is Glyoxylate/hydroxypyruvate reductase A.